Here is a 165-residue protein sequence, read N- to C-terminus: ATP synthase subunit b (165 aa).

Residues 11–31 (LIFWTIVNFLLLVFLLGKFAW) form a helical membrane-spanning segment.

Belongs to the ATPase B chain family. F-type ATPases have 2 components, F(1) - the catalytic core - and F(0) - the membrane proton channel. F(1) has five subunits: alpha(3), beta(3), gamma(1), delta(1), epsilon(1). F(0) has three main subunits: a(1), b(2) and c(10-14). The alpha and beta chains form an alternating ring which encloses part of the gamma chain. F(1) is attached to F(0) by a central stalk formed by the gamma and epsilon chains, while a peripheral stalk is formed by the delta and b chains.

The protein resides in the cell membrane. F(1)F(0) ATP synthase produces ATP from ADP in the presence of a proton or sodium gradient. F-type ATPases consist of two structural domains, F(1) containing the extramembraneous catalytic core and F(0) containing the membrane proton channel, linked together by a central stalk and a peripheral stalk. During catalysis, ATP synthesis in the catalytic domain of F(1) is coupled via a rotary mechanism of the central stalk subunits to proton translocation. In terms of biological role, component of the F(0) channel, it forms part of the peripheral stalk, linking F(1) to F(0). This Elusimicrobium minutum (strain Pei191) protein is ATP synthase subunit b.